Consider the following 327-residue polypeptide: o-succinylbenzoate synthase (327 aa).

Lys-110 (proton donor) is an active-site residue. 3 residues coordinate Mg(2+): Asp-138, Glu-165, and Asp-188. The active-site Proton acceptor is the Lys-212.

This sequence belongs to the mandelate racemase/muconate lactonizing enzyme family. MenC type 1 subfamily. Requires a divalent metal cation as cofactor.

It catalyses the reaction (1R,6R)-6-hydroxy-2-succinyl-cyclohexa-2,4-diene-1-carboxylate = 2-succinylbenzoate + H2O. The protein operates within quinol/quinone metabolism; 1,4-dihydroxy-2-naphthoate biosynthesis; 1,4-dihydroxy-2-naphthoate from chorismate: step 4/7. It functions in the pathway quinol/quinone metabolism; menaquinone biosynthesis. In terms of biological role, converts 2-succinyl-6-hydroxy-2,4-cyclohexadiene-1-carboxylate (SHCHC) to 2-succinylbenzoate (OSB). The protein is o-succinylbenzoate synthase of Mycobacterium ulcerans (strain Agy99).